The sequence spans 399 residues: Leu/Ile/Val-binding protein homolog 7 (399 aa).

The first 22 residues, 1–22, serve as a signal peptide directing secretion; that stretch reads MEKHLIALSVAALQAGAAPASA.

The protein belongs to the leucine-binding protein family.

Its function is as follows. Component of an amino-acid transport system. The sequence is that of Leu/Ile/Val-binding protein homolog 7 from Brucella abortus (strain 2308).